The sequence spans 364 residues: RNA-binding protein ZC3H11 (364 aa).

The C3H1-type zinc finger occupies R64 to E92. Residues V194 to Y199 carry the MKT1-binding motif motif. The segment at E340–L364 is disordered. A compositionally biased stretch (basic and acidic residues) spans L346–G357.

In terms of assembly, interacts (via MKT1-binding motif) with MKT1. Interacts with PBP1 (via C-terminus); the interaction is direct. Post-translationally, phosphorylated at the N-terminus. CK1.2-dependent phosphorylation may lead to proteasome-dependent degradation of ZC3H11 in absence of stress.

Its subcellular location is the cytoplasm. RNA-binding protein involved in regulation of mRNA stability. Binds AU-rich regions in the 3'-UTR of mRNAs and promotes their stabilization by recruiting a MKT1-containing complex. Stabilizes chaperone mRNAs during stress that causes an accumulation of misfolded or unfolded proteins in the cytoplasm. The polypeptide is RNA-binding protein ZC3H11 (Trypanosoma brucei brucei (strain 927/4 GUTat10.1)).